We begin with the raw amino-acid sequence, 131 residues long: Glycine cleavage system H protein (131 aa).

The 83-residue stretch at 24–106 folds into the Lipoyl-binding domain; sequence TLRVGITDYA…YGEGWLVDLQ (83 aa). K65 is subject to N6-lipoyllysine.

This sequence belongs to the GcvH family. As to quaternary structure, the glycine cleavage system is composed of four proteins: P, T, L and H. It depends on (R)-lipoate as a cofactor.

Its function is as follows. The glycine cleavage system catalyzes the degradation of glycine. The H protein shuttles the methylamine group of glycine from the P protein to the T protein. This Mycobacterium sp. (strain JLS) protein is Glycine cleavage system H protein.